We begin with the raw amino-acid sequence, 398 residues long: Riboflavin transporter RfnT (398 aa).

12 helical membrane passes run 13 to 35, 45 to 67, 74 to 91, 95 to 117, 137 to 156, 166 to 188, 220 to 242, 252 to 274, 281 to 300, 305 to 324, 345 to 367, and 372 to 389; these read ILTIAQALGASSPPIVISLGGLV, LVTLPVSLFNLGLALGTLPAAFF, RNAYMLGALVGAAAGVIA, IFAASFLIFCLGTLTAGFYASYV, ISWVMVGGLVAAIVGPQLVI, MFAGSFLSQAVLGLLALPVLFML, VAAGVCSYALMTFVMTAAPIAMV, ALGIQWHVLAMFAPSFFTGKLIT, ITALGLVLIAFSAIIALGGF, FWGALIFLGIGWNFGFIGAT, FIMFGTVACASFFAGSLLHSSGW, and WLVFPIVALVLVPLILRL.

This sequence belongs to the major facilitator superfamily.

The protein localises to the cell membrane. In terms of biological role, transports riboflavin into the cell. The chain is Riboflavin transporter RfnT from Brucella anthropi (strain ATCC 49188 / DSM 6882 / CCUG 24695 / JCM 21032 / LMG 3331 / NBRC 15819 / NCTC 12168 / Alc 37) (Ochrobactrum anthropi).